The following is a 269-amino-acid chain: 4-hydroxy-tetrahydrodipicolinate reductase (269 aa).

NAD(+) contacts are provided by residues 12 to 17, 102 to 104, and 126 to 129; these read GGSGRM, GTT, and SPNM. H159 (proton donor/acceptor) is an active-site residue. A (S)-2,3,4,5-tetrahydrodipicolinate-binding site is contributed by H160. Residue K163 is the Proton donor of the active site. A (S)-2,3,4,5-tetrahydrodipicolinate-binding site is contributed by 169-170; sequence GT.

It belongs to the DapB family.

It is found in the cytoplasm. The enzyme catalyses (S)-2,3,4,5-tetrahydrodipicolinate + NAD(+) + H2O = (2S,4S)-4-hydroxy-2,3,4,5-tetrahydrodipicolinate + NADH + H(+). It catalyses the reaction (S)-2,3,4,5-tetrahydrodipicolinate + NADP(+) + H2O = (2S,4S)-4-hydroxy-2,3,4,5-tetrahydrodipicolinate + NADPH + H(+). The protein operates within amino-acid biosynthesis; L-lysine biosynthesis via DAP pathway; (S)-tetrahydrodipicolinate from L-aspartate: step 4/4. Its function is as follows. Catalyzes the conversion of 4-hydroxy-tetrahydrodipicolinate (HTPA) to tetrahydrodipicolinate. The chain is 4-hydroxy-tetrahydrodipicolinate reductase from Leptospira borgpetersenii serovar Hardjo-bovis (strain JB197).